Here is a 336-residue protein sequence, read N- to C-terminus: S-adenosylmethionine:tRNA ribosyltransferase-isomerase (336 aa).

Belongs to the QueA family. Monomer.

It is found in the cytoplasm. It catalyses the reaction 7-aminomethyl-7-carbaguanosine(34) in tRNA + S-adenosyl-L-methionine = epoxyqueuosine(34) in tRNA + adenine + L-methionine + 2 H(+). It participates in tRNA modification; tRNA-queuosine biosynthesis. Transfers and isomerizes the ribose moiety from AdoMet to the 7-aminomethyl group of 7-deazaguanine (preQ1-tRNA) to give epoxyqueuosine (oQ-tRNA). This Sulfurihydrogenibium sp. (strain YO3AOP1) protein is S-adenosylmethionine:tRNA ribosyltransferase-isomerase.